The chain runs to 868 residues: Alanine--tRNA ligase (868 aa).

Residues H553, H557, C657, and H661 each coordinate Zn(2+). Residues G831–L851 are disordered.

The protein belongs to the class-II aminoacyl-tRNA synthetase family. Zn(2+) serves as cofactor.

It is found in the cytoplasm. The catalysed reaction is tRNA(Ala) + L-alanine + ATP = L-alanyl-tRNA(Ala) + AMP + diphosphate. Catalyzes the attachment of alanine to tRNA(Ala) in a two-step reaction: alanine is first activated by ATP to form Ala-AMP and then transferred to the acceptor end of tRNA(Ala). Also edits incorrectly charged Ser-tRNA(Ala) and Gly-tRNA(Ala) via its editing domain. The protein is Alanine--tRNA ligase of Chromohalobacter salexigens (strain ATCC BAA-138 / DSM 3043 / CIP 106854 / NCIMB 13768 / 1H11).